Here is a 281-residue protein sequence, read N- to C-terminus: Protein ZAR1-like 1.S (281 aa).

Residues 183-267 (QKYGFFQCKD…QDLCGRCKGQ (85 aa)) form a 3CxxC-type zinc finger.

The protein belongs to the ZAR1 family. Component of a cytoplasmic ribonucleoprotein complex together with eif4enif1/4E-T and cpeb1. As to expression, expressed in oocytes.

Its subcellular location is the cytoplasm. It is found in the cytoplasmic ribonucleoprotein granule. In terms of biological role, mRNA-binding protein required for maternal mRNA storage, translation and degradation during oocyte maturation. Controls timing of meiosis during oogenesis. Probably promotes formation of some phase-separated membraneless compartment that stores maternal mRNAs in oocytes: acts by undergoing liquid-liquid phase separation upon binding to maternal mRNAs. Binds to the 3'-UTR of maternal mRNAs, inhibiting their translation. The polypeptide is Protein ZAR1-like 1.S (Xenopus laevis (African clawed frog)).